The sequence spans 239 residues: Ribosome assembly factor mrt4 (239 aa).

It belongs to the universal ribosomal protein uL10 family. Associates with the pre-60S ribosomal particle.

The protein localises to the nucleus. It is found in the nucleolus. Its subcellular location is the cytoplasm. Component of the ribosome assembly machinery. Nuclear paralog of the ribosomal protein P0, it binds pre-60S subunits at an early stage of assembly in the nucleolus, and is replaced by P0 in cytoplasmic pre-60S subunits and mature 80S ribosomes. The chain is Ribosome assembly factor mrt4 from Candida glabrata (strain ATCC 2001 / BCRC 20586 / JCM 3761 / NBRC 0622 / NRRL Y-65 / CBS 138) (Yeast).